A 613-amino-acid chain; its full sequence is Dihydroxy-acid dehydratase (613 aa).

Asp-81 is a binding site for Mg(2+). Cys-122 provides a ligand contact to [2Fe-2S] cluster. Residues Asp-123 and Lys-124 each contribute to the Mg(2+) site. Lys-124 carries the N6-carboxylysine modification. Position 193 (Cys-193) interacts with [2Fe-2S] cluster. Residue Glu-489 coordinates Mg(2+). The Proton acceptor role is filled by Ser-515.

It belongs to the IlvD/Edd family. In terms of assembly, homodimer. It depends on [2Fe-2S] cluster as a cofactor. Mg(2+) is required as a cofactor.

The enzyme catalyses (2R)-2,3-dihydroxy-3-methylbutanoate = 3-methyl-2-oxobutanoate + H2O. It catalyses the reaction (2R,3R)-2,3-dihydroxy-3-methylpentanoate = (S)-3-methyl-2-oxopentanoate + H2O. It functions in the pathway amino-acid biosynthesis; L-isoleucine biosynthesis; L-isoleucine from 2-oxobutanoate: step 3/4. Its pathway is amino-acid biosynthesis; L-valine biosynthesis; L-valine from pyruvate: step 3/4. Functionally, functions in the biosynthesis of branched-chain amino acids. Catalyzes the dehydration of (2R,3R)-2,3-dihydroxy-3-methylpentanoate (2,3-dihydroxy-3-methylvalerate) into 2-oxo-3-methylpentanoate (2-oxo-3-methylvalerate) and of (2R)-2,3-dihydroxy-3-methylbutanoate (2,3-dihydroxyisovalerate) into 2-oxo-3-methylbutanoate (2-oxoisovalerate), the penultimate precursor to L-isoleucine and L-valine, respectively. This chain is Dihydroxy-acid dehydratase, found in Pseudomonas putida (strain W619).